The primary structure comprises 457 residues: MANDITAHWKDLLRKRLASLKPDGRTEEEKKAEESELFSKYYTEWKGGEKGEDDSFKHIPRFYYRLPAEDEVLMQKLREESRAVFLQRKSRELLDNEELQNLWFLLDKHQVPPTTGDEAMISYESFLKVGEKAGTKCKLFFTARVYAKLLHNDPYGRISIMQFFNYVMRKVWLHQTRIGLSLYDVAGQGYLRESDLENYILELIPTLPQLDGLEKSFYSFYVCTAVRKFFFFLDPLHTGKIKIQDILACSFLDDLLELRDEELSKESQESNWFSAPSALRVYGQYLNLDKDHNGMLSKEELSRYGTGTLTSVFLDRVYQACLTYDGEMDYKTYLDFVLALENRKEPAALQYIFKLLDMENKGYLNVFALNYFFRAIQEQMKIHGQEPVSFQDVKDEIFDMVKPKDPYKITLQDLVNSGQGDTVSSILIDLNGFWTYENREVLVANDTDSNAADLDDT.

EF-hand domains are found at residues 276 to 311 (PSAL…TLTS) and 344 to 379 (KEPA…IQEQ). Ca(2+)-binding residues include Asp-289, Asp-291, Asn-293, Met-295, and Glu-300.

The protein localises to the nucleus. It is found in the cytoplasm. Its function is as follows. Possible role in the regulation of cell death. In Danio rerio (Zebrafish), this protein is Serine/threonine-protein phosphatase 2A regulatory subunit B'' subunit gamma (ppp2r3c).